Here is a 314-residue protein sequence, read N- to C-terminus: tRNA dimethylallyltransferase (314 aa).

Residue 15-22 (GPTATGKS) coordinates ATP. Residue 17–22 (TATGKS) coordinates substrate. An interaction with substrate tRNA region spans residues 40–43 (DSML).

The protein belongs to the IPP transferase family. As to quaternary structure, monomer. The cofactor is Mg(2+).

The enzyme catalyses adenosine(37) in tRNA + dimethylallyl diphosphate = N(6)-dimethylallyladenosine(37) in tRNA + diphosphate. In terms of biological role, catalyzes the transfer of a dimethylallyl group onto the adenine at position 37 in tRNAs that read codons beginning with uridine, leading to the formation of N6-(dimethylallyl)adenosine (i(6)A). The polypeptide is tRNA dimethylallyltransferase (Pelotomaculum thermopropionicum (strain DSM 13744 / JCM 10971 / SI)).